We begin with the raw amino-acid sequence, 187 residues long: 5-formyltetrahydrofolate cyclo-ligase (187 aa).

ATP contacts are provided by residues 6–10, 139–146, and Asp-178; these read RQQIR and GMGGGFYD.

This sequence belongs to the 5-formyltetrahydrofolate cyclo-ligase family.

The catalysed reaction is (6S)-5-formyl-5,6,7,8-tetrahydrofolate + ATP = (6R)-5,10-methenyltetrahydrofolate + ADP + phosphate. It participates in one-carbon metabolism; tetrahydrofolate interconversion. Involved in the removal of 5-formyltetrahydrofolate. In vitro, it is a potent inhibitor of various folate-dependent enzymes in the C1 metabolism network and in vivo it might function as a folate storage. 5-formyltetrahydrofolate is also used as an antifolate rescue agent in cancer chemotherapy. Catalyzes the irreversible ATP-dependent transformation of 5-formyltetrahydrofolate (5-CHO-THF) to form 5,10-methenyltetrahydrofolate (5,10-CH=THF). The reverse reaction is catalyzed by the serine hydroxymethyltransferase GlyA (SHMT). The chain is 5-formyltetrahydrofolate cyclo-ligase from Haemophilus influenzae (strain ATCC 51907 / DSM 11121 / KW20 / Rd).